A 362-amino-acid polypeptide reads, in one-letter code: Chorismate synthase (362 aa).

Arg-47 contributes to the NADP(+) binding site. Residues Arg-124–Ser-126, Gly-286, Lys-301–Thr-305, and Arg-327 each bind FMN.

Belongs to the chorismate synthase family. Homotetramer. Requires FMNH2 as cofactor.

The enzyme catalyses 5-O-(1-carboxyvinyl)-3-phosphoshikimate = chorismate + phosphate. Its pathway is metabolic intermediate biosynthesis; chorismate biosynthesis; chorismate from D-erythrose 4-phosphate and phosphoenolpyruvate: step 7/7. Catalyzes the anti-1,4-elimination of the C-3 phosphate and the C-6 proR hydrogen from 5-enolpyruvylshikimate-3-phosphate (EPSP) to yield chorismate, which is the branch point compound that serves as the starting substrate for the three terminal pathways of aromatic amino acid biosynthesis. This reaction introduces a second double bond into the aromatic ring system. The protein is Chorismate synthase of Synechococcus sp. (strain ATCC 27144 / PCC 6301 / SAUG 1402/1) (Anacystis nidulans).